The primary structure comprises 660 residues: Poly [ADP-ribose] polymerase 2-A (660 aa).

The 35-residue stretch at 2–36 (SARLRVEELRAELQRRGLDASGNKPVLVRRLDAAI) folds into the SAP 1 domain. The segment at 40–92 (EEEEAAVSAAAKEEADAGGVVDGEGNGEDKRKRKRRGDGEDVDNSESDAAKLE) is disordered. The Nuclear localization signal signature appears at 69–75 (KRKRKRR). An SAP 2 domain is found at 91–125 (LEGMSYRELQALAKSRGLAANGSKKEVIERLLCAP). The WGR domain maps to 179-281 (TYHVLQVWFL…KSFECYARKY (103 aa)). In terms of domain architecture, PARP alpha-helical spans 308-426 (ETKLETRIAS…EIEIATKLLE (119 aa)). The 227-residue stretch at 434 to 660 (DPLYARYKQL…LHVSFNFKKR (227 aa)) folds into the PARP catalytic domain.

Belongs to the ARTD/PARP family.

It localises to the nucleus. It carries out the reaction NAD(+) + (ADP-D-ribosyl)n-acceptor = nicotinamide + (ADP-D-ribosyl)n+1-acceptor + H(+).. The catalysed reaction is L-aspartyl-[protein] + NAD(+) = 4-O-(ADP-D-ribosyl)-L-aspartyl-[protein] + nicotinamide. It catalyses the reaction L-glutamyl-[protein] + NAD(+) = 5-O-(ADP-D-ribosyl)-L-glutamyl-[protein] + nicotinamide. Its function is as follows. Involved in the base excision repair (BER) pathway, by catalyzing the poly(ADP-ribosyl)ation of a limited number of acceptor proteins involved in chromatin architecture and in DNA metabolism. This modification follows DNA damages and appears as an obligatory step in a detection/signaling pathway leading to the reparation of DNA strand breaks. This chain is Poly [ADP-ribose] polymerase 2-A (PARP2-A), found in Oryza sativa subsp. japonica (Rice).